Reading from the N-terminus, the 324-residue chain is o-succinylbenzoate synthase (324 aa).

Residue Lys135 is the Proton donor of the active site. Residues Asp163, Glu192, and Asp215 each coordinate Mg(2+). Lys237 acts as the Proton acceptor in catalysis.

This sequence belongs to the mandelate racemase/muconate lactonizing enzyme family. MenC type 1 subfamily. A divalent metal cation serves as cofactor.

It carries out the reaction (1R,6R)-6-hydroxy-2-succinyl-cyclohexa-2,4-diene-1-carboxylate = 2-succinylbenzoate + H2O. Its pathway is quinol/quinone metabolism; 1,4-dihydroxy-2-naphthoate biosynthesis; 1,4-dihydroxy-2-naphthoate from chorismate: step 4/7. It participates in quinol/quinone metabolism; menaquinone biosynthesis. Functionally, converts 2-succinyl-6-hydroxy-2,4-cyclohexadiene-1-carboxylate (SHCHC) to 2-succinylbenzoate (OSB). This chain is o-succinylbenzoate synthase, found in Aliivibrio fischeri (strain ATCC 700601 / ES114) (Vibrio fischeri).